Reading from the N-terminus, the 550-residue chain is Hydroxylamine reductase (550 aa).

Residues Cys-3, Cys-6, Cys-18, and Cys-25 each contribute to the [2Fe-2S] cluster site. His-249, Glu-273, Cys-317, Cys-405, Cys-433, Cys-458, Glu-492, and Lys-494 together coordinate hybrid [4Fe-2O-2S] cluster. Residue Cys-405 is modified to Cysteine persulfide.

It belongs to the HCP family. The cofactor is [2Fe-2S] cluster. Requires hybrid [4Fe-2O-2S] cluster as cofactor.

The protein localises to the cytoplasm. It carries out the reaction A + NH4(+) + H2O = hydroxylamine + AH2 + H(+). Catalyzes the reduction of hydroxylamine to form NH(3) and H(2)O. The sequence is that of Hydroxylamine reductase from Salmonella schwarzengrund (strain CVM19633).